The primary structure comprises 144 residues: Cytochrome c oxidase subunit 4 isoform 1, mitochondrial (144 aa).

Topologically, residues Ser-1–Asn-73 are mitochondrial matrix. N6-acetyllysine; alternate is present on Lys-4. Position 4 is an N6-succinyllysine; alternate (Lys-4). The residue at position 28 (Lys-28) is an N6-acetyllysine. 2 positions are modified to phosphoserine: Ser-31 and Ser-33. Lys-35 is modified (N6-acetyllysine; alternate). Lys-35 carries the N6-succinyllysine; alternate modification. N6-acetyllysine is present on Lys-42. The chain crosses the membrane as a helical span at residues Glu-74–Tyr-99. Residues Val-100–Lys-144 lie on the Mitochondrial intermembrane side of the membrane.

The protein belongs to the cytochrome c oxidase IV family. As to quaternary structure, component of the cytochrome c oxidase (complex IV, CIV), a multisubunit enzyme composed of 14 subunits. The complex is composed of a catalytic core of 3 subunits MT-CO1, MT-CO2 and MT-CO3, encoded in the mitochondrial DNA, and 11 supernumerary subunits COX4I, COX5A, COX5B, COX6A, COX6B, COX6C, COX7A, COX7B, COX7C, COX8 and NDUFA4, which are encoded in the nuclear genome. The complex exists as a monomer or a dimer and forms supercomplexes (SCs) in the inner mitochondrial membrane with NADH-ubiquinone oxidoreductase (complex I, CI) and ubiquinol-cytochrome c oxidoreductase (cytochrome b-c1 complex, complex III, CIII), resulting in different assemblies (supercomplex SCI(1)III(2)IV(1) and megacomplex MCI(2)III(2)IV(2)). Interacts with PHB2; the interaction decreases in absence of SPHK2. Interacts with AFG1L. Interacts with ABCB7; this interaction allows the regulation of cellular iron homeostasis and cellular reactive oxygen species (ROS) levels in cardiomyocytes. Interacts with FLVCR2; this interaction occurs in the absence of heme and is disrupted upon heme binding. Interacts with IRGC.

Its subcellular location is the mitochondrion inner membrane. Its pathway is energy metabolism; oxidative phosphorylation. Its function is as follows. Component of the cytochrome c oxidase, the last enzyme in the mitochondrial electron transport chain which drives oxidative phosphorylation. The respiratory chain contains 3 multisubunit complexes succinate dehydrogenase (complex II, CII), ubiquinol-cytochrome c oxidoreductase (cytochrome b-c1 complex, complex III, CIII) and cytochrome c oxidase (complex IV, CIV), that cooperate to transfer electrons derived from NADH and succinate to molecular oxygen, creating an electrochemical gradient over the inner membrane that drives transmembrane transport and the ATP synthase. Cytochrome c oxidase is the component of the respiratory chain that catalyzes the reduction of oxygen to water. Electrons originating from reduced cytochrome c in the intermembrane space (IMS) are transferred via the dinuclear copper A center (CU(A)) of subunit 2 and heme A of subunit 1 to the active site in subunit 1, a binuclear center (BNC) formed by heme A3 and copper B (CU(B)). The BNC reduces molecular oxygen to 2 water molecules using 4 electrons from cytochrome c in the IMS and 4 protons from the mitochondrial matrix. In Pan troglodytes (Chimpanzee), this protein is Cytochrome c oxidase subunit 4 isoform 1, mitochondrial (COX4I1).